The primary structure comprises 308 residues: Ornithine carbamoyltransferase (308 aa).

Carbamoyl phosphate contacts are provided by residues 56–59 (STRT), Q83, R107, and 134–137 (HPCQ). L-ornithine-binding positions include N165, D225, and 229–230 (SM). Carbamoyl phosphate is bound by residues 266 to 267 (CL) and R294.

It belongs to the aspartate/ornithine carbamoyltransferase superfamily. OTCase family.

It is found in the cytoplasm. The catalysed reaction is carbamoyl phosphate + L-ornithine = L-citrulline + phosphate + H(+). Its pathway is amino-acid biosynthesis; L-arginine biosynthesis; L-arginine from L-ornithine and carbamoyl phosphate: step 1/3. Functionally, reversibly catalyzes the transfer of the carbamoyl group from carbamoyl phosphate (CP) to the N(epsilon) atom of ornithine (ORN) to produce L-citrulline. The chain is Ornithine carbamoyltransferase from Cereibacter sphaeroides (strain ATCC 17023 / DSM 158 / JCM 6121 / CCUG 31486 / LMG 2827 / NBRC 12203 / NCIMB 8253 / ATH 2.4.1.) (Rhodobacter sphaeroides).